Here is a 166-residue protein sequence, read N- to C-terminus: Large ribosomal subunit protein uL11 (166 aa).

The protein belongs to the universal ribosomal protein uL11 family.

In terms of biological role, this protein binds directly to 26S ribosomal RNA. This chain is Large ribosomal subunit protein uL11 (RPL12), found in Prunus armeniaca (Apricot).